Here is a 181-residue protein sequence, read N- to C-terminus: Adenylate kinase (181 aa).

10–15 (GAGKGT) contributes to the ATP binding site. An NMP region spans residues 30 to 59 (STGDLFRANIGEGTPLGLEAKSYIDAGKLV). Residues Thr-31, Arg-36, 57 to 59 (KLV), 85 to 88 (GFPR), and Gln-92 each bind AMP. Positions 126–132 (ARGRADD) are LID. Arg-127 lines the ATP pocket. Residues Arg-129 and Arg-140 each coordinate AMP. Gly-166 lines the ATP pocket.

Belongs to the adenylate kinase family. As to quaternary structure, monomer.

It is found in the cytoplasm. It carries out the reaction AMP + ATP = 2 ADP. It functions in the pathway purine metabolism; AMP biosynthesis via salvage pathway; AMP from ADP: step 1/1. Catalyzes the reversible transfer of the terminal phosphate group between ATP and AMP. Plays an important role in cellular energy homeostasis and in adenine nucleotide metabolism. This chain is Adenylate kinase, found in Corynebacterium aurimucosum (strain ATCC 700975 / DSM 44827 / CIP 107346 / CN-1) (Corynebacterium nigricans).